Here is a 195-residue protein sequence, read N- to C-terminus: Imidazoleglycerol-phosphate dehydratase (195 aa).

It belongs to the imidazoleglycerol-phosphate dehydratase family.

It localises to the cytoplasm. The enzyme catalyses D-erythro-1-(imidazol-4-yl)glycerol 3-phosphate = 3-(imidazol-4-yl)-2-oxopropyl phosphate + H2O. It functions in the pathway amino-acid biosynthesis; L-histidine biosynthesis; L-histidine from 5-phospho-alpha-D-ribose 1-diphosphate: step 6/9. In Aromatoleum aromaticum (strain DSM 19018 / LMG 30748 / EbN1) (Azoarcus sp. (strain EbN1)), this protein is Imidazoleglycerol-phosphate dehydratase.